A 509-amino-acid chain; its full sequence is ATP synthase subunit alpha (509 aa).

An ATP-binding site is contributed by 169–176 (GDRQTGKT).

Belongs to the ATPase alpha/beta chains family. In terms of assembly, F-type ATPases have 2 components, CF(1) - the catalytic core - and CF(0) - the membrane proton channel. CF(1) has five subunits: alpha(3), beta(3), gamma(1), delta(1), epsilon(1). CF(0) has three main subunits: a(1), b(2) and c(9-12). The alpha and beta chains form an alternating ring which encloses part of the gamma chain. CF(1) is attached to CF(0) by a central stalk formed by the gamma and epsilon chains, while a peripheral stalk is formed by the delta and b chains.

Its subcellular location is the cell inner membrane. The enzyme catalyses ATP + H2O + 4 H(+)(in) = ADP + phosphate + 5 H(+)(out). Its function is as follows. Produces ATP from ADP in the presence of a proton gradient across the membrane. The alpha chain is a regulatory subunit. The polypeptide is ATP synthase subunit alpha (Parvibaculum lavamentivorans (strain DS-1 / DSM 13023 / NCIMB 13966)).